A 496-amino-acid polypeptide reads, in one-letter code: Solute carrier family 2, facilitated glucose transporter member 3 (496 aa).

Residues 1–10 (MGTQKVTPAL) lie on the Cytoplasmic side of the membrane. Residues 11–32 (IFAITVATIGSFQFGYNTGVIN) form a helical membrane-spanning segment. At 33-64 (APEKIIKEFINKTLTDKGNAPPSEVLLTSLWS) the chain is on the extracellular side. N-linked (GlcNAc...) asparagine glycosylation is present at Asn43. A helical membrane pass occupies residues 65–85 (LSVAIFSVGGMIGSFSVGLFV). Over 86-90 (NRFGR) the chain is Cytoplasmic. A helical transmembrane segment spans residues 91–111 (RNSMLIVNLLAVTGGCFMGLC). Topologically, residues 112 to 118 (KVAKSVE) are extracellular. Residues 119–142 (MLILGRLIIGLFCGLCTGFVPMYI) traverse the membrane as a helical segment. At 143–153 (GEISPTALRGA) the chain is on the cytoplasmic side. A helical membrane pass occupies residues 154–174 (FGTLNQLGIVVGILVAQIFGL). Gln159 provides a ligand contact to D-glucose. Residues 175 to 183 (EFILGSEEL) lie on the Extracellular side of the membrane. Residues 184-204 (WPLLLGFTILPTILQSAALPF) form a helical membrane-spanning segment. At 205-269 (CPESPRFLLI…LFRVSSYRQP (65 aa)) the chain is on the cytoplasmic side. At Thr232 the chain carries Phosphothreonine. Residues 270–290 (IIISIVLQLSQQLSGINAVFY) traverse the membrane as a helical segment. The segment at 277-279 (QLS) is important for selectivity against fructose. D-glucose contacts are provided by residues 280–281 (QQ) and Asn286. Residues 291 to 304 (YSTGIFKDAGVQEP) are Extracellular-facing. The chain crosses the membrane as a helical span at residues 305–325 (IYATIGAGVVNTIFTVVSLFL). D-glucose is bound at residue Asn315. At 326 to 331 (VERAGR) the chain is on the cytoplasmic side. Residues 332 to 352 (RTLHMIGLGGMAFCSTLMTVS) form a helical membrane-spanning segment. Topologically, residues 353–363 (LLLKDNYNGMS) are extracellular. Residues 364-389 (FVCIGAILVFVAFFEIGPGPIPWFIV) traverse the membrane as a helical segment. D-glucose is bound by residues Glu378 and Trp386. The Cytoplasmic portion of the chain corresponds to 390-399 (AELFSQGPRP). Residues 400–420 (AAMAVAGCSNWTSNFLVGLLF) form a helical membrane-spanning segment. Topologically, residues 421 to 429 (PSAAHYLGA) are extracellular. Residues 430–450 (YVFIIFTGFLITFLAFTFFKV) traverse the membrane as a helical segment. Residues 451–496 (PETRGRTFEDITRAFEGQAHGADRSGKDGVMEVNSIEPAKETTTNV) lie on the Cytoplasmic side of the membrane. Phosphoserine is present on residues Ser475 and Ser485. Residue Thr492 is modified to Phosphothreonine.

The protein belongs to the major facilitator superfamily. Sugar transporter (TC 2.A.1.1) family. Glucose transporter subfamily. Interacts with SMIM43; the interaction may promote SLC2A3-mediated glucose transport to meet the energy needs of mesendoderm differentiation.

The protein resides in the cell membrane. It localises to the perikaryon. Its subcellular location is the cell projection. It catalyses the reaction D-glucose(out) = D-glucose(in). The enzyme catalyses D-galactose(in) = D-galactose(out). Its activity is regulated as follows. Deoxyglucose transport is inhibited by D-glucose, D-galactose and maltose. Galactose transport is inhibited by D-glucose and maltose. Its function is as follows. Facilitative glucose transporter. Can also mediate the uptake of various other monosaccharides across the cell membrane. Mediates the uptake of glucose, 2-deoxyglucose, galactose, mannose, xylose and fucose, and probably also dehydroascorbate. Does not mediate fructose transport. Required for mesendoderm differentiation. The sequence is that of Solute carrier family 2, facilitated glucose transporter member 3 from Pongo abelii (Sumatran orangutan).